Here is a 211-residue protein sequence, read N- to C-terminus: Glycerol-3-phosphate acyltransferase (211 aa).

A run of 5 helical transmembrane segments spans residues 10–30 (FTTW…FGLL), 63–83 (ALTL…IKFL), 90–110 (NIFI…PVWL), 126–146 (LGLY…LFLI), and 152–172 (LSAL…YPYL).

The protein belongs to the PlsY family. Probably interacts with PlsX.

It is found in the cell inner membrane. The enzyme catalyses an acyl phosphate + sn-glycerol 3-phosphate = a 1-acyl-sn-glycero-3-phosphate + phosphate. It participates in lipid metabolism; phospholipid metabolism. Functionally, catalyzes the transfer of an acyl group from acyl-phosphate (acyl-PO(4)) to glycerol-3-phosphate (G3P) to form lysophosphatidic acid (LPA). This enzyme utilizes acyl-phosphate as fatty acyl donor, but not acyl-CoA or acyl-ACP. In Bartonella henselae (strain ATCC 49882 / DSM 28221 / CCUG 30454 / Houston 1) (Rochalimaea henselae), this protein is Glycerol-3-phosphate acyltransferase.